The following is a 284-amino-acid chain: Nucleotide-binding protein Sbal_3671 (284 aa).

8–15 (GRSGSGKS) is an ATP binding site. A GTP-binding site is contributed by 56–59 (DVRN).

This sequence belongs to the RapZ-like family.

Displays ATPase and GTPase activities. This chain is Nucleotide-binding protein Sbal_3671, found in Shewanella baltica (strain OS155 / ATCC BAA-1091).